We begin with the raw amino-acid sequence, 105 residues long: Intermembrane phospholipid transport system binding protein MlaB (105 aa).

One can recognise an STAS domain in the interval 4–105 (WDLQKNNDKI…GLSDWIANFI (102 aa)).

The complex is composed of two ATP-binding proteins (MlaF), two transmembrane proteins (MlaE), two cytoplasmic solute-binding proteins (MlaB) and six periplasmic solute-binding proteins (MlaD).

The protein localises to the cytoplasm. Part of the ABC transporter complex MlaFEDB, which is involved in a phospholipid transport pathway that maintains lipid asymmetry in the outer membrane by retrograde trafficking of phospholipids from the outer membrane to the inner membrane. MlaB plays critical roles in both the assembly and activity of the complex. May act by modulating MlaF structure and stability. This Haemophilus influenzae (strain ATCC 51907 / DSM 11121 / KW20 / Rd) protein is Intermembrane phospholipid transport system binding protein MlaB.